The chain runs to 406 residues: Putative colanic acid biosynthesis glycosyltransferase WcaL (406 aa).

The protein belongs to the glycosyltransferase group 1 family. Glycosyltransferase 4 subfamily.

It participates in slime biogenesis; slime polysaccharide biosynthesis. This chain is Putative colanic acid biosynthesis glycosyltransferase WcaL (wcaL), found in Escherichia coli (strain K12).